A 170-amino-acid chain; its full sequence is Methanogen homoaconitase small subunit (170 aa).

The YLRT motif lies at 26–29 (YLRT).

Belongs to the LeuD family. LeuD type 2 subfamily. Heterotetramer of 2 HacA and 2 HacB proteins.

The catalysed reaction is (2R)-homocitrate = (2R,3S)-homoisocitrate. It carries out the reaction (2R)-homocitrate = cis-homoaconitate + H2O. It catalyses the reaction (2R,3S)-homoisocitrate = cis-homoaconitate + H2O. The enzyme catalyses cis-(homo)2aconitate + H2O = (2R,3S)-iso(homo)2citrate. The catalysed reaction is cis-(homo)3aconitate + H2O = (2R,3S)-iso(homo)3citrate. The protein operates within organic acid metabolism; 2-oxosuberate biosynthesis. Functionally, component of a hydro-lyase with broad substrate specificity for cis-unsaturated tricarboxylic acids. Catalyzes both the reversible dehydration of (R)-homocitrate ((R)-2-hydroxybutane-1,2,4-tricarboxylate) to produce cis-homoaconitate ((Z)-but-1-ene-1,2,4-tricarboxylate), and its hydration to homoisocitrate ((1R,2S)-1-hydroxybutane-1,2,4-tricarboxylate). Is also able to hydrate the analogous longer chain substrates cis-homo(2)-aconitate, cis-homo(3)-aconitate. These reactions are part of the biosynthesis pathway of coenzyme B. In Methanothermobacter thermautotrophicus (strain ATCC 29096 / DSM 1053 / JCM 10044 / NBRC 100330 / Delta H) (Methanobacterium thermoautotrophicum), this protein is Methanogen homoaconitase small subunit (hacB).